We begin with the raw amino-acid sequence, 171 residues long: Nicotinamide-nucleotide adenylyltransferase (171 aa).

It belongs to the archaeal NMN adenylyltransferase family.

It localises to the cytoplasm. It carries out the reaction beta-nicotinamide D-ribonucleotide + ATP + H(+) = diphosphate + NAD(+). Its pathway is cofactor biosynthesis; NAD(+) biosynthesis; NAD(+) from nicotinamide D-ribonucleotide: step 1/1. This chain is Nicotinamide-nucleotide adenylyltransferase, found in Methanococcus maripaludis (strain C5 / ATCC BAA-1333).